Consider the following 496-residue polypeptide: Sodium/sialic acid symporter SiaT (496 aa).

Topologically, residues 1 to 7 are periplasmic; sequence MQLHDFG. A helical transmembrane segment spans residues 8–29; that stretch reads FINYAVLFGYLAAMLLVGVYFS. Residues 30-46 are Cytoplasmic-facing; sequence KRQKTADDYFRGGGRVP. Residues 47–59 traverse the membrane as a helical segment; that stretch reads GWAAGVSVFATTL. Na(+) is bound at residue alanine 56. Residue threonine 58 participates in N-acetyl-alpha-neuraminate binding. Leucine 59 lines the Na(+) pocket. The N-acetyl-alpha-neuraminate site is built by serine 60, threonine 63, and glutamine 82. Topologically, residues 60 to 76 are periplasmic; it reads SSITFMSIPAKAYTSDW. A helical transmembrane segment spans residues 77-92; it reads TFIIGQYLAIAILPLV. Topologically, residues 93–116 are cytoplasmic; it reads FYFYIPFFRKLKITSAYEYLEARF. The chain crosses the membrane as a helical span at residues 117–144; the sequence is DVRSRLFASLSFMLFHIGRVAIITYLTV. Arginine 135 is an N-acetyl-alpha-neuraminate binding site. The Periplasmic segment spans residues 145–154; it reads LALRPFMGID. A helical transmembrane segment spans residues 155 to 172; the sequence is PVVLIVLISLLCIIYTWM. The Cytoplasmic portion of the chain corresponds to 173–174; that stretch reads GG. The helical transmembrane segment at 175–199 threads the bilayer; sequence IEGVIWTDVIQGLLLSGGAVLIFIM. Aspartate 182 contributes to the Na(+) binding site. At 200–235 the chain is on the periplasmic side; that stretch reads ICFKVDGGISEIFTTTAQADKFFPTTQWRWSWTDST. The helical transmembrane segment at 236-252 threads the bilayer; it reads IPVLMIGFLFANIQQFT. Topologically, residues 253 to 272 are cytoplasmic; sequence ASQDVVQRYIVTDSIKETKR. The chain crosses the membrane as a helical span at residues 273–292; sequence TLITNAKLVAIIPIFFFAIG. The Periplasmic segment spans residues 293 to 325; sequence SALFVYYQQNPSLLPAGFNTGGILPLFIVTEMP. The helical transmembrane segment at 326 to 356 threads the bilayer; sequence IGIAGLIIAAIFAAAQSSISSSLNSISSCFN. Residues alanine 339, serine 342, serine 343, serine 345, and serine 346 each coordinate Na(+). Over 357 to 374 the chain is Cytoplasmic; sequence SDIYTRLSKSSPSPEQKM. Residues 375-396 traverse the membrane as a helical segment; the sequence is KVAKLVIIVAGIFSSLAAIWLV. Residues 397–403 lie on the Periplasmic side of the membrane; the sequence is LSDEAEI. Residues 404 to 427 form a helical membrane-spanning segment; the sequence is WDAFNSLIGLMGGPMTGLFMLGIF. Residues 428-432 are Cytoplasmic-facing; it reads VKRAN. Residues 433 to 453 traverse the membrane as a helical segment; that stretch reads AGSAVVGIIVSIIAVLAARYG. The Periplasmic segment spans residues 454 to 457; it reads SDLN. Residues 458 to 479 traverse the membrane as a helical segment; it reads FFFYGVIGSMSVVIAGTITAPL. The Cytoplasmic segment spans residues 480–496; that stretch reads FAPAKQLSLDDSETSEN.

Belongs to the sodium:solute symporter (SSF) (TC 2.A.21) family.

It localises to the cell inner membrane. The catalysed reaction is N-acetyl-alpha-neuraminate(out) + 2 Na(+)(out) = N-acetyl-alpha-neuraminate(in) + 2 Na(+)(in). Its activity is regulated as follows. Both Na(+) sites regulate Neu5Ac transport. The binding energy of the second Na(+) ion may be used to allosterically stabilize the substrate without directly coordinating it. In the absence of external Na(+), the rate is reduced by 78%. Functionally, symporter that uses the Na(+) gradient as the driving force for the uptake of the sialic acid N-acetylneuraminic acid (Neu5Ac). It allows the use of host-derived Neu5Ac as an energy source by P.mirabilis. Also binds N-glycolylneuraminic acid (Neu5Gc) and ketodeoxynonulosonic acid (KDN). Shows the highest affinity for Neu5Ac and Neu5Gc, which commonly occupy the terminal non-reducing position of mammalian cell surface glycoconjugates. This chain is Sodium/sialic acid symporter SiaT, found in Proteus mirabilis (strain HI4320).